The following is a 61-amino-acid chain: Potassium channel toxin kappa-KTx 2.8 (61 aa).

A signal peptide spans 1-21 (GTVYVFLLLLAFGIFTDISNA). Residues 22-35 (CSEQMDDEDSYEVE) constitute a propeptide that is removed on maturation. 2 disulfides stabilise this stretch: Cys-41–Cys-59 and Cys-45–Cys-55.

The protein belongs to the short scorpion toxin superfamily. Potassium channel inhibitor kappa-KTx family. Kappa-KTx 2 subfamily. In terms of tissue distribution, expressed by the venom gland.

It is found in the secreted. In terms of biological role, voltage-gated potassium channel inhibitor (Kv) that acts on Kv1.3/KCNA3 and Kv7.1/KCNQ1. 1 uM of the toxin inhibits Kv1.3/KCNA3 currents by 35.1%, whereas 10 uM of the toxin inhibits Kv7.1/KCNQ1 currents by 44.9%. This chain is Potassium channel toxin kappa-KTx 2.8, found in Heterometrus petersii (Asian forest scorpion).